A 211-amino-acid polypeptide reads, in one-letter code: Large ribosomal subunit protein eL13 (211 aa).

This sequence belongs to the eukaryotic ribosomal protein eL13 family. Component of the 60S large ribosomal subunit (LSU).

It is found in the cytoplasm. Component of the ribosome, a large ribonucleoprotein complex responsible for the synthesis of proteins in the cell. The small ribosomal subunit (SSU) binds messenger RNAs (mRNAs) and translates the encoded message by selecting cognate aminoacyl-transfer RNA (tRNA) molecules. The large subunit (LSU) contains the ribosomal catalytic site termed the peptidyl transferase center (PTC), which catalyzes the formation of peptide bonds, thereby polymerizing the amino acids delivered by tRNAs into a polypeptide chain. The nascent polypeptides leave the ribosome through a tunnel in the LSU and interact with protein factors that function in enzymatic processing, targeting, and the membrane insertion of nascent chains at the exit of the ribosomal tunnel. As part of the LSU, it is probably required for its formation and the maturation of rRNAs. The sequence is that of Large ribosomal subunit protein eL13 (RPL13) from Gallus gallus (Chicken).